Here is a 52-residue protein sequence, read N- to C-terminus: Conotoxin Cal6.3b (52 aa).

A propeptide spanning residues 1 to 4 (KKKR) is cleaved from the precursor. 3 cysteine pairs are disulfide-bonded: Cys-12/Cys-23, Cys-15/Cys-27, and Cys-22/Cys-30. The residue at position 50 (Gln-50) is a Glutamine amide.

Expressed by the venom duct.

The protein localises to the secreted. Its function is as follows. Probable neurotoxin with unknown target. Possibly targets ion channels. The chain is Conotoxin Cal6.3b from Californiconus californicus (California cone).